Consider the following 550-residue polypeptide: Carboxypeptidase Y homolog A (550 aa).

A signal peptide spans Met1–Pro18. Positions Leu19–Lys131 are excised as a propeptide. Residues Gln20–Val39 form a disordered region. Cystine bridges form between Cys185–Cys424, Cys319–Cys333, Cys343–Cys366, Cys350–Cys359, and Cys388–Cys394. Residues Asn203 and Asn216 are each glycosylated (N-linked (GlcNAc...) asparagine). Ser272 is an active-site residue. Asn289 carries N-linked (GlcNAc...) asparagine glycosylation. Residue Asn387 is glycosylated (N-linked (GlcNAc...) asparagine). The active site involves Asp463. Asn493 and Asn514 each carry an N-linked (GlcNAc...) asparagine glycan. The active site involves His525.

This sequence belongs to the peptidase S10 family.

The protein resides in the vacuole. The catalysed reaction is Release of a C-terminal amino acid with broad specificity.. Its function is as follows. Vacuolar carboxypeptidase involved in degradation of small peptides. Digests preferentially peptides containing an aliphatic or hydrophobic residue in P1' position, as well as methionine, leucine or phenylalanine in P1 position of ester substrate. The sequence is that of Carboxypeptidase Y homolog A (CPYA) from Paracoccidioides brasiliensis (strain Pb03).